The chain runs to 310 residues: Beta-lactamase AST-1 (310 aa).

The N-terminal stretch at 1 to 31 is a signal peptide; sequence MTFSALPFRRADRRRLLAAALAACALTLTAA. Residue Cys-32 is the site of N-palmitoyl cysteine attachment. Cys-32 is lipidated: S-diacylglycerol cysteine. The active-site Acyl-ester intermediate is Ser-91. Residue Ser-151 coordinates substrate. Glu-187 functions as the Proton acceptor in the catalytic mechanism. Substrate is bound at residue 255–257; it reads KTG.

It belongs to the class-A beta-lactamase family.

The protein localises to the cell membrane. The enzyme catalyses a beta-lactam + H2O = a substituted beta-amino acid. Inhibited by clavulanic acid. Functionally, confers high levels of resistance to amoxicillin, benzylpenicillin, piperacillin, ticarcillin and cephalothin. Not active against ceftazidime, cefotaxime and aztreonam. The polypeptide is Beta-lactamase AST-1 (bla) (Nocardia asteroides).